A 717-amino-acid polypeptide reads, in one-letter code: Adhesion cell surface protein MAD1 (717 aa).

Positions 1 to 19 (MKSALSVVVAAAGVQQASA) are cleaved as a signal peptide. Low complexity-rich tracts occupy residues 237–254 (TPVTTLQTYTTPSQQTTT) and 262–274 (SKETTTSAQQTTP). Disordered stretches follow at residues 237–392 (TPVT…ATTT) and 451–506 (RTQS…TPPC). 8 repeat units span residues 275 to 286 (GKETTPAQQTTP), 287 to 298 (SKETTPVQQTTS), 299 to 310 (GKETTPAQQTTP), 311 to 328 (GKETTSSQETTSAHQTTP), 329 to 340 (GKETTPAQQTTP), 341 to 352 (GKETTPAQQTTP), 353 to 364 (GKETTPAQQTTP), and 365 to 376 (GKETTPAQQTTP). Polar residues predominate over residues 275 to 366 (GKETTPAQQT…TPAQQTTPGK (92 aa)). 2 stretches are compositionally biased toward low complexity: residues 368–392 (TTPAQQTTPGQQTTPSQPTTAATTT) and 484–503 (QPTGEKPNPVTSQPPQSTQT). Positions 481-595 (TPEQPTGEKP…TQIITVTGTP (115 aa)) constitute a CFEM domain. Intrachain disulfides connect C513–C546, C524–C532, and C534–C568. D529 serves as a coordination point for heme. N-linked (GlcNAc...) asparagine glycosylation occurs at N614. A disordered region spans residues 632–690 (PTPTGGVPNQPPATASVPAGQNPPPVTGQNPPPAVTDQSPPPAITTGTGGVIPPKPTGS). Pro residues predominate over residues 652–674 (QNPPPVTGQNPPPAVTDQSPPPA). A695 carries GPI-anchor amidated alanine lipidation. A propeptide spans 696–717 (GSGRVGAGLGMVLAVAAFVAAL) (removed in mature form).

This sequence belongs to the RBT5 family. In terms of processing, the GPI-anchor is attached to the protein in the endoplasmic reticulum and serves to target the protein to the cell surface. There, the glucosamine-inositol phospholipid moiety is cleaved off and the GPI-modified mannoprotein is covalently attached via its lipidless GPI glycan remnant to the 1,6-beta-glucan of the outer cell wall layer.

Its subcellular location is the secreted. It localises to the cell wall. The protein localises to the cell membrane. Cell surface adhesion protein that plays a key role in virulence by allowing adherence to the insect host surface. Required to orientate the cytoskeleton and stimulate the expression of genes involved in the cell cycle. Is also involved in achieving the septin hourglass shape and subsequent separation of cells. The sequence is that of Adhesion cell surface protein MAD1 from Metarhizium anisopliae (Entomophthora anisopliae).